Consider the following 226-residue polypeptide: uncharacterized protein (226 aa).

This sequence belongs to the mimivirus L246/L426 family.

This is an uncharacterized protein from Acanthamoeba polyphaga mimivirus (APMV).